The sequence spans 261 residues: Lipase LipV (261 aa).

Catalysis depends on S87, which acts as the Nucleophile. Active-site charge relay system residues include D217 and H240.

Belongs to the AB hydrolase superfamily.

It catalyses the reaction a carboxylic ester + H2O = an alcohol + a carboxylate + H(+). The enzyme catalyses a tetradecanoate ester + H2O = an aliphatic alcohol + tetradecanoate + H(+). It carries out the reaction decanoate ester + H2O = decanoate + an aliphatic alcohol + H(+). The catalysed reaction is an octanoate ester + H2O = an aliphatic alcohol + octanoate + H(+). It catalyses the reaction a dodecanoate ester + H2O = an aliphatic alcohol + dodecanoate + H(+). The enzyme catalyses a butanoate ester + H2O = an aliphatic alcohol + butanoate + H(+). It carries out the reaction hexadecanoate ester + H2O = an aliphatic alcohol + hexadecanoate + H(+). The catalysed reaction is octadecanoate ester + H2O = an aliphatic alcohol + octadecanoate + H(+). With respect to regulation, is inhibited by tetrahydrolipstatin, a specific lipase inhibitor and RHC 80267, a diacylglycerol lipase inhibitor, but not by phenylglyoxal and iodoacetate. Functionally, lipase that displays broad substrate specificity and preferentially hydrolyzes p-nitrophenyl myristate in vitro. Also shows significant activity with pNP-butyrate (68%), pNP-octanoate (82%), pNP-decanoate (90%), and pNP-laurate (74%). Is probably involved in lipid catabolism. Is active at low pH, and might play some important role in mycobacterial biology in macrophages where the bacteria encounters acidic stress. This chain is Lipase LipV, found in Mycobacterium tuberculosis (strain ATCC 25618 / H37Rv).